Consider the following 117-residue polypeptide: NADH-ubiquinone oxidoreductase chain 3 (117 aa).

A run of 3 helical transmembrane segments spans residues 4–24 (IIFI…LASI), 60–80 (ITII…MIII), and 86–106 (IMIW…GLYH).

This sequence belongs to the complex I subunit 3 family.

Its subcellular location is the mitochondrion membrane. The enzyme catalyses a ubiquinone + NADH + 5 H(+)(in) = a ubiquinol + NAD(+) + 4 H(+)(out). In terms of biological role, core subunit of the mitochondrial membrane respiratory chain NADH dehydrogenase (Complex I) that is believed to belong to the minimal assembly required for catalysis. Complex I functions in the transfer of electrons from NADH to the respiratory chain. The immediate electron acceptor for the enzyme is believed to be ubiquinone. This Drosophila melanogaster (Fruit fly) protein is NADH-ubiquinone oxidoreductase chain 3 (mt:ND3).